Here is a 262-residue protein sequence, read N- to C-terminus: Catechol O-methyltransferase domain-containing protein 1 (262 aa).

The chain crosses the membrane as a helical; Signal-anchor for type II membrane protein span at residues alanine 12–glycine 32. S-adenosyl-L-methionine contacts are provided by residues aspartate 108, glycine 110 to threonine 111, serine 116, glutamate 134, valine 135, alanine 163, aspartate 185, aspartate 187, and tyrosine 194.

The protein belongs to the class I-like SAM-binding methyltransferase superfamily. Cation-dependent O-methyltransferase family. As to quaternary structure, homodimer.

The protein resides in the membrane. Putative O-methyltransferase. In Homo sapiens (Human), this protein is Catechol O-methyltransferase domain-containing protein 1 (COMTD1).